The chain runs to 678 residues: Photosystem I P700 chlorophyll a apoprotein A1 (678 aa).

The next 8 membrane-spanning stretches (helical) occupy residues 75–98 (VFAANLAHIGVAFIWLSGMHFHGA), 152–175 (LKVIAAFGLIASALCFLGSYFHMH), 192–216 (STHHLVGLLGLGSLAWAGHLIHISL), 266–284 (SAMHHFALALVLIVGSVLG), 302–325 (WHLVLGVQLFVTGTASVLYAQMSN), 341–367 (VSLFVHHMWIGGFFLVGAFAHLSIGLV), 384–406 (IILGHLTWVVAFLGVHSFGLYVH), and 458–476 (FMVTHIHAFTIHTTVLILV). The [4Fe-4S] cluster site is built by cysteine 500 and cysteine 509. The next 2 membrane-spanning stretches (helical) occupy residues 516 to 537 (HVFLGLFWMYNSISVVIFHFFW) and 591 to 613 (LAAYGLTFPASHFVWALSLMFLF). Position 602 (histidine 602) interacts with chlorophyll a'. Chlorophyll a-binding residues include methionine 610 and tyrosine 618. Tryptophan 619 serves as a coordination point for phylloquinone. A helical transmembrane segment spans residues 651–671 (AVGFTHYLLGGIGSTWSFFLA).

Belongs to the PsaA/PsaB family. In terms of assembly, the PsaA/B heterodimer binds the P700 chlorophyll special pair and subsequent electron acceptors. PSI consists of a core antenna complex that captures photons, and an electron transfer chain that converts photonic excitation into a charge separation. The eukaryotic PSI reaction center is composed of at least 11 subunits. The cofactor is P700 is a chlorophyll a/chlorophyll a' dimer, A0 is one or more chlorophyll a, A1 is one or both phylloquinones and FX is a shared 4Fe-4S iron-sulfur center..

The protein localises to the plastid. It localises to the chloroplast thylakoid membrane. The catalysed reaction is reduced [plastocyanin] + hnu + oxidized [2Fe-2S]-[ferredoxin] = oxidized [plastocyanin] + reduced [2Fe-2S]-[ferredoxin]. Its function is as follows. PsaA and PsaB bind P700, the primary electron donor of photosystem I (PSI), as well as the electron acceptors A0, A1 and FX. PSI is a plastocyanin/cytochrome c6-ferredoxin oxidoreductase, converting photonic excitation into a charge separation, which transfers an electron from the donor P700 chlorophyll pair to the spectroscopically characterized acceptors A0, A1, FX, FA and FB in turn. Oxidized P700 is reduced on the lumenal side of the thylakoid membrane by plastocyanin or cytochrome c6. The polypeptide is Photosystem I P700 chlorophyll a apoprotein A1 (Amphidinium carterae (Dinoflagellate)).